The sequence spans 272 residues: UPF0759 protein YecE (272 aa).

Belongs to the UPF0759 family.

The sequence is that of UPF0759 protein YecE (yecE) from Escherichia coli (strain K12).